Here is a 20-residue protein sequence, read N- to C-terminus: Cytotoxin drCT-1 (20 aa).

It belongs to the three-finger toxin family. Short-chain subfamily. Type IA cytotoxin sub-subfamily. Monomer in solution; Homodimer and oligomer in the presence of negatively charged lipids forming a pore with a size ranging between 20 and 30 Angstroms. In terms of tissue distribution, expressed by the venom gland.

It localises to the secreted. The protein resides in the target cell membrane. Functionally, this three-finger cytotoxin has antiproliferative, cytotoxic and apoptotic activities. Both in vivo and in vitro experimental results suggests that this protein possess anticancer potential. Also shows neurotoxicity, cardiotoxicity and myotoxicity. This Daboia russelii (Russel's viper) protein is Cytotoxin drCT-1.